Here is a 616-residue protein sequence, read N- to C-terminus: Chaperone protein HtpG (616 aa).

The a; substrate-binding stretch occupies residues 1-333 (MKKQFDTEVN…CQDLPLNVSR (333 aa)). The interval 334–542 (EILQQNKILS…SNDPTYQMQK (209 aa)) is b. Residues 543-616 (IMLSMGQEVK…INEFLEKELL (74 aa)) are c.

It belongs to the heat shock protein 90 family. In terms of assembly, homodimer.

Its subcellular location is the cytoplasm. Its function is as follows. Molecular chaperone. Has ATPase activity. The protein is Chaperone protein HtpG of Borrelia garinii subsp. bavariensis (strain ATCC BAA-2496 / DSM 23469 / PBi) (Borreliella bavariensis).